A 187-amino-acid chain; its full sequence is Aspartic protease inhibitor 9 (187 aa).

The N-linked (GlcNAc...) asparagine glycan is linked to N19. Intrachain disulfides connect C48–C93 and C142–C158.

This sequence belongs to the protease inhibitor I3 (leguminous Kunitz-type inhibitor) family. Post-translationally, glycosylated. Tubers.

Its subcellular location is the vacuole. Functionally, inhibitor of cathepsin D (aspartic protease) and trypsin (serine protease). May protect the plant by inhibiting proteases of invading organisms. This Solanum tuberosum (Potato) protein is Aspartic protease inhibitor 9.